The primary structure comprises 431 residues: Glucose-1-phosphate adenylyltransferase (431 aa).

Lysine 39 contributes to the beta-D-fructose 1,6-bisphosphate binding site. AMP contacts are provided by arginine 40, histidine 46, and arginine 52. Position 114 (tyrosine 114) interacts with alpha-D-glucose 1-phosphate. Residue arginine 130 participates in AMP binding. Residues glycine 179, 194-195, and serine 212 each bind alpha-D-glucose 1-phosphate; that span reads EK. AMP contacts are provided by glutamate 370 and arginine 386. Beta-D-fructose 1,6-bisphosphate contacts are provided by residues 419-423 and 429-431; these read REMLR and QER.

Belongs to the bacterial/plant glucose-1-phosphate adenylyltransferase family. Homotetramer.

It catalyses the reaction alpha-D-glucose 1-phosphate + ATP + H(+) = ADP-alpha-D-glucose + diphosphate. The protein operates within glycan biosynthesis; glycogen biosynthesis. Allosterically activated by fructose-1,6-bisphosphate (F16BP) and inhibited by AMP. Involved in the biosynthesis of ADP-glucose, a building block required for the elongation reactions to produce glycogen. Catalyzes the reaction between ATP and alpha-D-glucose 1-phosphate (G1P) to produce pyrophosphate and ADP-Glc. The chain is Glucose-1-phosphate adenylyltransferase from Escherichia coli O45:K1 (strain S88 / ExPEC).